The chain runs to 174 residues: Peptide methionine sulfoxide reductase MsrA (174 aa).

Cysteine 11 is an active-site residue.

Belongs to the MsrA Met sulfoxide reductase family.

The enzyme catalyses L-methionyl-[protein] + [thioredoxin]-disulfide + H2O = L-methionyl-(S)-S-oxide-[protein] + [thioredoxin]-dithiol. It catalyses the reaction [thioredoxin]-disulfide + L-methionine + H2O = L-methionine (S)-S-oxide + [thioredoxin]-dithiol. Functionally, has an important function as a repair enzyme for proteins that have been inactivated by oxidation. Catalyzes the reversible oxidation-reduction of methionine sulfoxide in proteins to methionine. The sequence is that of Peptide methionine sulfoxide reductase MsrA from Pasteurella multocida (strain Pm70).